A 260-amino-acid chain; its full sequence is Dehydrogenase/reductase SDR family member 4 (260 aa).

An NADP(+)-binding site is contributed by 14 to 38 (IVTAATKGIGLAIAERLLDEGASVV). A substrate-binding site is contributed by Ser148. Tyr161 serves as the catalytic Proton acceptor. An NADP(+)-binding site is contributed by Lys165.

The protein belongs to the short-chain dehydrogenases/reductases (SDR) family.

The catalysed reaction is a secondary alcohol + NADP(+) = a ketone + NADPH + H(+). Catalyzes the reduction of isatin, 4-oxonon-2-enal, 9,10-phenanthrenequinone, menadione, 2,3-hexaenadione, 3,4-hexanedione and 2,3-heptanedione. The chain is Dehydrogenase/reductase SDR family member 4 from Caenorhabditis elegans.